We begin with the raw amino-acid sequence, 399 residues long: Coiled-coil domain-containing protein 85C-B (399 aa).

Coiled coils occupy residues 52–84 (NRSL…ELCC) and 113–144 (KEVS…DIIL). Positions 151 to 199 (NGAGSRSSIDSQSSLSNLNGGSGTVRDVGDGSSTSSGGSAGSPDHHHNH) are disordered. Positions 155–169 (SRSSIDSQSSLSNLN) are enriched in low complexity.

It belongs to the CCDC85 family.

It localises to the cell junction. The protein localises to the tight junction. Its subcellular location is the adherens junction. May play a role in cell-cell adhesion and epithelium development through its interaction with proteins of the beta-catenin family. May play an important role in cortical development, especially in the maintenance of radial glia. The sequence is that of Coiled-coil domain-containing protein 85C-B (ccdc85cb) from Danio rerio (Zebrafish).